We begin with the raw amino-acid sequence, 83 residues long: MSTIEEKVKTIISEQLGVKQEEVVNHASFVEDLGADSLDTVELVMALEEEFDTEIPDEEAEKITTVQAAIDFISNSHQQNKSN.

The Carrier domain maps to 2 to 77 (STIEEKVKTI…AAIDFISNSH (76 aa)). Ser37 is subject to O-(pantetheine 4'-phosphoryl)serine.

It belongs to the acyl carrier protein (ACP) family. In terms of processing, 4'-phosphopantetheine is transferred from CoA to a specific serine of apo-ACP by AcpS. This modification is essential for activity because fatty acids are bound in thioester linkage to the sulfhydryl of the prosthetic group.

Its subcellular location is the cytoplasm. The protein operates within lipid metabolism; fatty acid biosynthesis. Carrier of the growing fatty acid chain in fatty acid biosynthesis. In Blochmanniella pennsylvanica (strain BPEN), this protein is Acyl carrier protein.